A 634-amino-acid chain; its full sequence is Heat shock 70-related protein 1, mitochondrial (634 aa).

Residues 1–20 constitute a mitochondrion transit peptide; it reads MFARRVCGSAAASAACLARH. A coiled-coil region spans residues 538 to 614; it reads SEQHAEADRV…AAATDKLQKA (77 aa).

It belongs to the heat shock protein 70 family.

The protein resides in the mitochondrion. This Leishmania major protein is Heat shock 70-related protein 1, mitochondrial (HSP70.1).